Reading from the N-terminus, the 860-residue chain is Leucine--tRNA ligase (860 aa).

Residues 42-52 (PYPSGRLHMGH) carry the 'HIGH' region motif. A 'KMSKS' region motif is present at residues 619-623 (KMSKS). Residue Lys622 participates in ATP binding.

It belongs to the class-I aminoacyl-tRNA synthetase family.

The protein localises to the cytoplasm. The catalysed reaction is tRNA(Leu) + L-leucine + ATP = L-leucyl-tRNA(Leu) + AMP + diphosphate. This is Leucine--tRNA ligase from Yersinia pestis bv. Antiqua (strain Angola).